We begin with the raw amino-acid sequence, 104 residues long: N(4)-acetylcytidine amidohydrolase (104 aa).

An ASCH domain is found at 7–93 (MTFFSRFEAD…EVIQEIYPGI (87 aa)). K22 functions as the Proton acceptor in the catalytic mechanism. The active-site Nucleophile is the T25. The Proton donor role is filled by E75.

Belongs to the N(4)-acetylcytidine amidohydrolase family.

The enzyme catalyses N(4)-acetylcytidine + H2O = cytidine + acetate + H(+). It carries out the reaction N(4)-acetyl-2'-deoxycytidine + H2O = 2'-deoxycytidine + acetate + H(+). It catalyses the reaction N(4)-acetylcytosine + H2O = cytosine + acetate + H(+). Its function is as follows. Catalyzes the hydrolysis of N(4)-acetylcytidine (ac4C). The polypeptide is N(4)-acetylcytidine amidohydrolase (Vibrio vulnificus (strain CMCP6)).